A 191-amino-acid chain; its full sequence is Ureidoglycolate lyase (191 aa).

The protein belongs to the ureidoglycolate lyase family. In terms of assembly, homodimer.

It catalyses the reaction (S)-ureidoglycolate = urea + glyoxylate. The protein operates within nitrogen metabolism; (S)-allantoin degradation. Functionally, catalyzes the catabolism of the allantoin degradation intermediate (S)-ureidoglycolate, generating urea and glyoxylate. Involved in the utilization of allantoin as secondary nitrogen source when primary sources are limiting. The chain is Ureidoglycolate lyase from Schizosaccharomyces pombe (strain 972 / ATCC 24843) (Fission yeast).